The chain runs to 400 residues: uncharacterized protein (400 aa).

Belongs to the mimivirus R640 family.

The protein localises to the virion. This is an uncharacterized protein from Acanthamoeba polyphaga (Amoeba).